The following is a 553-amino-acid chain: Formate--tetrahydrofolate ligase (553 aa).

56-63 (TPKGEGKT) is an ATP binding site.

This sequence belongs to the formate--tetrahydrofolate ligase family.

The enzyme catalyses (6S)-5,6,7,8-tetrahydrofolate + formate + ATP = (6R)-10-formyltetrahydrofolate + ADP + phosphate. Its pathway is one-carbon metabolism; tetrahydrofolate interconversion. The polypeptide is Formate--tetrahydrofolate ligase (Haloarcula marismortui (strain ATCC 43049 / DSM 3752 / JCM 8966 / VKM B-1809) (Halobacterium marismortui)).